A 1213-amino-acid chain; its full sequence is DNA-directed RNA polymerase subunit beta' (1213 aa).

Positions 60, 62, 75, and 78 each coordinate Zn(2+). Mg(2+) contacts are provided by aspartate 450, aspartate 452, and aspartate 454. Positions 819, 893, 900, and 903 each coordinate Zn(2+).

It belongs to the RNA polymerase beta' chain family. In terms of assembly, the RNAP catalytic core consists of 2 alpha, 1 beta, 1 beta' and 1 omega subunit. When a sigma factor is associated with the core the holoenzyme is formed, which can initiate transcription. The cofactor is Mg(2+). Requires Zn(2+) as cofactor.

The catalysed reaction is RNA(n) + a ribonucleoside 5'-triphosphate = RNA(n+1) + diphosphate. In terms of biological role, DNA-dependent RNA polymerase catalyzes the transcription of DNA into RNA using the four ribonucleoside triphosphates as substrates. The sequence is that of DNA-directed RNA polymerase subunit beta' from Streptococcus pyogenes serotype M6 (strain ATCC BAA-946 / MGAS10394).